Consider the following 287-residue polypeptide: Acetyl-coenzyme A carboxylase carboxyl transferase subunit beta (287 aa).

One can recognise a CoA carboxyltransferase N-terminal domain in the interval 25–287 (IWTKCSGCVQ…KLTQQSFSEK (263 aa)). C29, C32, C48, and C51 together coordinate Zn(2+). The segment at 29-51 (CSGCVQLLYTKELERNLQVCPKC) adopts a C4-type zinc-finger fold.

The protein belongs to the AccD/PCCB family. In terms of assembly, acetyl-CoA carboxylase is a heterohexamer composed of biotin carboxyl carrier protein (AccB), biotin carboxylase (AccC) and two subunits each of ACCase subunit alpha (AccA) and ACCase subunit beta (AccD). Requires Zn(2+) as cofactor.

It is found in the cytoplasm. It catalyses the reaction N(6)-carboxybiotinyl-L-lysyl-[protein] + acetyl-CoA = N(6)-biotinyl-L-lysyl-[protein] + malonyl-CoA. The protein operates within lipid metabolism; malonyl-CoA biosynthesis; malonyl-CoA from acetyl-CoA: step 1/1. In terms of biological role, component of the acetyl coenzyme A carboxylase (ACC) complex. Biotin carboxylase (BC) catalyzes the carboxylation of biotin on its carrier protein (BCCP) and then the CO(2) group is transferred by the transcarboxylase to acetyl-CoA to form malonyl-CoA. This Blochmanniella floridana protein is Acetyl-coenzyme A carboxylase carboxyl transferase subunit beta.